The following is a 701-amino-acid chain: Polyribonucleotide nucleotidyltransferase (701 aa).

2 residues coordinate Mg(2+): Asp-480 and Asp-486. The KH domain maps to 547–606 (PKIDTIKIDVDKIKVVIGKGGETIDKIIAETGVKIDIDDEGNVSIYSSDQAAINRTKEII). The 69-residue stretch at 616–684 (GEVYHAKVVR…EKGRVDASMK (69 aa)) folds into the S1 motif domain. The tract at residues 682–701 (SMKALIPRPPKPEKKEEKHD) is disordered. The span at 691–701 (PKPEKKEEKHD) shows a compositional bias: basic and acidic residues.

This sequence belongs to the polyribonucleotide nucleotidyltransferase family. Requires Mg(2+) as cofactor.

Its subcellular location is the cytoplasm. It carries out the reaction RNA(n+1) + phosphate = RNA(n) + a ribonucleoside 5'-diphosphate. Its function is as follows. Involved in mRNA degradation. Catalyzes the phosphorolysis of single-stranded polyribonucleotides processively in the 3'- to 5'-direction. In Streptococcus pyogenes serotype M12 (strain MGAS2096), this protein is Polyribonucleotide nucleotidyltransferase.